Reading from the N-terminus, the 86-residue chain is Protein IDA-LIKE 1 (86 aa).

The N-terminal stretch at 1–27 (MNLSHKTMFMTLYIVFLLIFGSYNATA) is a signal peptide.

As to expression, expressed in roots.

The protein resides in the secreted. It localises to the extracellular space. Its function is as follows. Involved in an ethylene-independent separation step of floral abscission. May act with RLK5 and HSL2 as ligand-receptor pairs. The polypeptide is Protein IDA-LIKE 1 (IDL1) (Arabidopsis thaliana (Mouse-ear cress)).